The chain runs to 342 residues: Dihydroorotase (342 aa).

The Zn(2+) site is built by His-13 and His-15. Substrate is bound by residues 15 to 17 (HLR) and Asn-41. Zn(2+) contacts are provided by Lys-97, His-134, and His-172. Lys-97 is subject to N6-carboxylysine. His-134 contacts substrate. Residue Leu-217 coordinates substrate. Residue Asp-245 coordinates Zn(2+). Asp-245 is a catalytic residue. Positions 249 and 261 each coordinate substrate.

This sequence belongs to the metallo-dependent hydrolases superfamily. DHOase family. Class II DHOase subfamily. As to quaternary structure, homodimer. It depends on Zn(2+) as a cofactor.

It carries out the reaction (S)-dihydroorotate + H2O = N-carbamoyl-L-aspartate + H(+). It participates in pyrimidine metabolism; UMP biosynthesis via de novo pathway; (S)-dihydroorotate from bicarbonate: step 3/3. Functionally, catalyzes the reversible cyclization of carbamoyl aspartate to dihydroorotate. The polypeptide is Dihydroorotase (Shewanella loihica (strain ATCC BAA-1088 / PV-4)).